The chain runs to 637 residues: tRNA uridine 5-carboxymethylaminomethyl modification enzyme MnmG (637 aa).

Residues 15–20 (GAGHAG), valine 127, and serine 182 contribute to the FAD site. NAD(+) is bound at residue 274–288 (GPRYCPSIEDKVVRF). Glutamine 371 is an FAD binding site.

It belongs to the MnmG family. In terms of assembly, homodimer. Heterotetramer of two MnmE and two MnmG subunits. The cofactor is FAD.

The protein resides in the cytoplasm. Functionally, NAD-binding protein involved in the addition of a carboxymethylaminomethyl (cmnm) group at the wobble position (U34) of certain tRNAs, forming tRNA-cmnm(5)s(2)U34. The protein is tRNA uridine 5-carboxymethylaminomethyl modification enzyme MnmG of Heliobacterium modesticaldum (strain ATCC 51547 / Ice1).